The primary structure comprises 130 residues: Small ribosomal subunit protein uS11 (130 aa).

The segment at isoleucine 111–alanine 130 is disordered.

The protein belongs to the universal ribosomal protein uS11 family. Part of the 30S ribosomal subunit. Interacts with proteins S7 and S18. Binds to IF-3.

In terms of biological role, located on the platform of the 30S subunit, it bridges several disparate RNA helices of the 16S rRNA. Forms part of the Shine-Dalgarno cleft in the 70S ribosome. This chain is Small ribosomal subunit protein uS11, found in Lactobacillus acidophilus (strain ATCC 700396 / NCK56 / N2 / NCFM).